The chain runs to 938 residues: Isoleucine--tRNA ligase (938 aa).

The 'HIGH' region motif lies at 58–68 (PYANGSIHIGH). Lys183 is modified (N6-acetyllysine). L-isoleucyl-5'-AMP is bound at residue Glu561. The 'KMSKS' region motif lies at 602–606 (KMSKS). Lys605 is an ATP binding site. Zn(2+) is bound by residues Cys901, Cys904, Cys921, and Cys924.

It belongs to the class-I aminoacyl-tRNA synthetase family. IleS type 1 subfamily. Monomer. Zn(2+) is required as a cofactor.

The protein resides in the cytoplasm. It catalyses the reaction tRNA(Ile) + L-isoleucine + ATP = L-isoleucyl-tRNA(Ile) + AMP + diphosphate. Its function is as follows. Catalyzes the attachment of isoleucine to tRNA(Ile). As IleRS can inadvertently accommodate and process structurally similar amino acids such as valine, to avoid such errors it has two additional distinct tRNA(Ile)-dependent editing activities. One activity is designated as 'pretransfer' editing and involves the hydrolysis of activated Val-AMP. The other activity is designated 'posttransfer' editing and involves deacylation of mischarged Val-tRNA(Ile). In Escherichia coli O17:K52:H18 (strain UMN026 / ExPEC), this protein is Isoleucine--tRNA ligase.